The chain runs to 251 residues: MNKYDRLDEITKLVNKRGSVRTNEIVEDLNVSDMTVRRDLAELEEKGVLTKIHGGARSNSAFQYKEMSHQEKHTRFIEEKRFIAKNAVDLIEDGDTIFLGPGTTVQKLAEEINHYSLTIITNCLPVFNILIKKQTLHFRVYLLGGEMRDLTEAFVGEMTNQLLSQLRFSKMFFSSNGVKDGLAMTSSIEEAYTQQIALSHSLEKYLLIDSSKIGKDDFSSFCELRELNAVLTDNNDLEKKEKIESYVEVIS.

The region spanning 3–58 (KYDRLDEITKLVNKRGSVRTNEIVEDLNVSDMTVRRDLAELEEKGVLTKIHGGARS) is the HTH deoR-type domain. A DNA-binding region (H-T-H motif) is located at residues 20–39 (VRTNEIVEDLNVSDMTVRRD).

Functionally, repressor of the lactose catabolism operon. Galactose-6-phosphate is the inducer. In Staphylococcus epidermidis (strain ATCC 35984 / DSM 28319 / BCRC 17069 / CCUG 31568 / BM 3577 / RP62A), this protein is Lactose phosphotransferase system repressor (lacR).